A 328-amino-acid polypeptide reads, in one-letter code: tRNA uridine(34) hydroxylase (328 aa).

Residues 130-224 (LDKDTVVLDT…YGKDPEVQGE (95 aa)) enclose the Rhodanese domain. Cys-184 serves as the catalytic Cysteine persulfide intermediate.

This sequence belongs to the TrhO family.

It carries out the reaction uridine(34) in tRNA + AH2 + O2 = 5-hydroxyuridine(34) in tRNA + A + H2O. Its function is as follows. Catalyzes oxygen-dependent 5-hydroxyuridine (ho5U) modification at position 34 in tRNAs. The chain is tRNA uridine(34) hydroxylase from Streptococcus pneumoniae (strain P1031).